The primary structure comprises 87 residues: Small ribosomal subunit protein bS16c (87 aa).

This sequence belongs to the bacterial ribosomal protein bS16 family.

It is found in the plastid. Its subcellular location is the chloroplast. In Zygnema circumcarinatum (Green alga), this protein is Small ribosomal subunit protein bS16c.